A 671-amino-acid chain; its full sequence is DNA ligase (671 aa).

Residues 32–36, 81–82, and Glu-113 contribute to the NAD(+) site; these read DAEYD and SL. The active-site N6-AMP-lysine intermediate is the Lys-115. NAD(+) is bound by residues Arg-136, Glu-173, Lys-290, and Lys-314. 4 residues coordinate Zn(2+): Cys-408, Cys-411, Cys-426, and Cys-432. The BRCT domain maps to 593–671; it reads EIDSPFAGKT…EAEMLRLLGS (79 aa).

This sequence belongs to the NAD-dependent DNA ligase family. LigA subfamily. Requires Mg(2+) as cofactor. Mn(2+) serves as cofactor.

It catalyses the reaction NAD(+) + (deoxyribonucleotide)n-3'-hydroxyl + 5'-phospho-(deoxyribonucleotide)m = (deoxyribonucleotide)n+m + AMP + beta-nicotinamide D-nucleotide.. Functionally, DNA ligase that catalyzes the formation of phosphodiester linkages between 5'-phosphoryl and 3'-hydroxyl groups in double-stranded DNA using NAD as a coenzyme and as the energy source for the reaction. It is essential for DNA replication and repair of damaged DNA. The sequence is that of DNA ligase from Escherichia coli (strain SE11).